The primary structure comprises 186 residues: dCTP deaminase (186 aa).

Residue 107–112 (KSTYAR) participates in dCTP binding. The active-site Proton donor/acceptor is E133. 3 residues coordinate dCTP: Q152, Y166, and Q176.

It belongs to the dCTP deaminase family. As to quaternary structure, homotrimer.

It catalyses the reaction dCTP + H2O + H(+) = dUTP + NH4(+). Its pathway is pyrimidine metabolism; dUMP biosynthesis; dUMP from dCTP (dUTP route): step 1/2. Catalyzes the deamination of dCTP to dUTP. In Campylobacter jejuni subsp. doylei (strain ATCC BAA-1458 / RM4099 / 269.97), this protein is dCTP deaminase.